Reading from the N-terminus, the 744-residue chain is Endonuclease MutS2 (744 aa).

G315–T322 serves as a coordination point for ATP. Residues V668–R743 form the Smr domain.

It belongs to the DNA mismatch repair MutS family. MutS2 subfamily. As to quaternary structure, homodimer. Interacts with MutL. Binds to stalled ribosomes, contacting rRNA.

Its activity is regulated as follows. Nuclease activity is stimulated by interaction with MutL. ATPase activity is stimulated by dsDNA. Its function is as follows. Endonuclease that is involved in the suppression of homologous recombination and may thus have a key role in the control of bacterial genetic diversity. Cleaves the phosphate backbone of oligodeoxynucleotides non-sequence-specifically at the 3' side of the phosphates. Preferably incises the branched DNA structures, especially the D-loop structure over the Holliday junction. Has ATPase activity. Binds to dsDNA but not to ssDNA. Functionally, acts as a ribosome collision sensor, splitting the ribosome into its 2 subunits. Detects stalled/collided 70S ribosomes which it binds and splits by an ATP-hydrolysis driven conformational change. Acts upstream of the ribosome quality control system (RQC), a ribosome-associated complex that mediates the extraction of incompletely synthesized nascent chains from stalled ribosomes and their subsequent degradation. Probably generates substrates for RQC. This chain is Endonuclease MutS2, found in Thermus thermophilus (strain ATCC 27634 / DSM 579 / HB8).